We begin with the raw amino-acid sequence, 56 residues long: Large ribosomal subunit protein bL33 (56 aa).

Belongs to the bacterial ribosomal protein bL33 family.

This Helicobacter hepaticus (strain ATCC 51449 / 3B1) protein is Large ribosomal subunit protein bL33.